The sequence spans 273 residues: MEANMPKRKEPGRSLRIKVISMGNAEVGKSCIIKRYCEKRFVSKYLATIGIDYGVTKVHVRDREIKVNIFDMAGHPFFYEVRNEFYKDTQGVILVYDVGQKDSFDALDAWLAEMKQELGPHGNMENIIFVVCANKIDCTKHRCVDESEGRLWAESKGFLYFETSAQTGEGINEMFQTFYISIVDLCENGGKRPTTNSSASFTKEQADAIRRIRNSKDSWDMLGVKPGASRDEVNKAYRKLAVLLHPDKCVAPGSEDAFKAVVNARTALLKNIK.

Residues 1–18 are required for interaction with MAPK1; it reads MEANMPKRKEPGRSLRIK. GTP contacts are provided by residues 23-30, 71-75, and 134-137; these read GNAEVGKS, DMAGH, and NKID. Positions 217–273 constitute a J domain; that stretch reads DSWDMLGVKPGASRDEVNKAYRKLAVLLHPDKCVAPGSEDAFKAVVNARTALLKNIK.

It belongs to the small GTPase superfamily. Rab family. In terms of assembly, interacts directly with MAPK1 (wild-type and kinase-deficient forms). Interacts directly (in GTP-bound form) with MAP2K1 (wild-type and kinase-deficient forms). Overexpressed in gastrointestinal cancers; expression correlates with later tumor-node-metastasis stages of colorectal cancers.

The protein resides in the nucleus. Functionally, GTPase which can activate the MEK/ERK pathway and induce cell transformation when overexpressed. May act as a nuclear scaffold for MAPK1, probably by association with MAPK1 nuclear export signal leading to enhanced ERK1/ERK2 signaling. The polypeptide is DnaJ homolog subfamily C member 27 (DNAJC27) (Homo sapiens (Human)).